We begin with the raw amino-acid sequence, 337 residues long: Nucleoid-associated protein HSM_0096 (337 aa).

This sequence belongs to the YejK family.

The protein localises to the cytoplasm. It is found in the nucleoid. The sequence is that of Nucleoid-associated protein HSM_0096 from Histophilus somni (strain 2336) (Haemophilus somnus).